A 249-amino-acid polypeptide reads, in one-letter code: Uridylate kinase (249 aa).

23–26 (KISG) serves as a coordination point for ATP. An involved in allosteric activation by GTP region spans residues 31–36 (GDQGFG). Gly65 lines the UMP pocket. The ATP site is built by Gly66 and Arg70. UMP contacts are provided by residues Asp85 and 146–153 (TGNPYFTT). Residues Thr173, Tyr179, and Asp182 each coordinate ATP.

Belongs to the UMP kinase family. In terms of assembly, homohexamer.

It is found in the cytoplasm. It carries out the reaction UMP + ATP = UDP + ADP. Its pathway is pyrimidine metabolism; CTP biosynthesis via de novo pathway; UDP from UMP (UMPK route): step 1/1. Its activity is regulated as follows. Allosterically activated by GTP. Inhibited by UTP. In terms of biological role, catalyzes the reversible phosphorylation of UMP to UDP. In Jannaschia sp. (strain CCS1), this protein is Uridylate kinase.